We begin with the raw amino-acid sequence, 382 residues long: Lipid-A-disaccharide synthase (382 aa).

This sequence belongs to the LpxB family.

The catalysed reaction is 2-N,3-O-bis[(3R)-3-hydroxytetradecanoyl]-alpha-D-glucosaminyl 1-phosphate + UDP-2-N,3-O-bis[(3R)-3-hydroxytetradecanoyl]-alpha-D-glucosamine = lipid A disaccharide (E. coli) + UDP + H(+). It carries out the reaction a lipid X + a UDP-2-N,3-O-bis[(3R)-3-hydroxyacyl]-alpha-D-glucosamine = a lipid A disaccharide + UDP + H(+). It participates in glycolipid biosynthesis; lipid IV(A) biosynthesis; lipid IV(A) from (3R)-3-hydroxytetradecanoyl-[acyl-carrier-protein] and UDP-N-acetyl-alpha-D-glucosamine: step 5/6. Condensation of UDP-2,3-diacylglucosamine and 2,3-diacylglucosamine-1-phosphate to form lipid A disaccharide, a precursor of lipid A, a phosphorylated glycolipid that anchors the lipopolysaccharide to the outer membrane of the cell. This Escherichia coli (strain K12 / MC4100 / BW2952) protein is Lipid-A-disaccharide synthase.